Here is a 512-residue protein sequence, read N- to C-terminus: Perphorin-1 (512 aa).

The signal sequence occupies residues 1–18; sequence MMRKALLALCVATAFAVA. N49, N96, N118, N378, N381, N403, and N476 each carry an N-linked (GlcNAc...) asparagine glycan.

The protein resides in the secreted. It localises to the extracellular space. The protein localises to the extracellular matrix. Functionally, may be involved in conversion of asexual males and females to the sexual pathway. This chain is Perphorin-1, found in Volvox carteri (Green alga).